The chain runs to 381 residues: N-acetyldiaminopimelate deacetylase (381 aa).

Aspartate 71 is an active-site residue. The Proton acceptor role is filled by glutamate 130.

It belongs to the peptidase M20A family. N-acetyldiaminopimelate deacetylase subfamily.

It carries out the reaction N-acetyl-(2S,6S)-2,6-diaminopimelate + H2O = (2S,6S)-2,6-diaminopimelate + acetate. The protein operates within amino-acid biosynthesis; L-lysine biosynthesis via DAP pathway; LL-2,6-diaminopimelate from (S)-tetrahydrodipicolinate (acetylase route): step 3/3. Functionally, catalyzes the conversion of N-acetyl-diaminopimelate to diaminopimelate and acetate. This Ligilactobacillus salivarius (strain UCC118) (Lactobacillus salivarius) protein is N-acetyldiaminopimelate deacetylase.